A 486-amino-acid chain; its full sequence is 2-isopropylmalate synthase (486 aa).

In terms of domain architecture, Pyruvate carboxyltransferase spans 4 to 266 (VYIFDTTLRD…KTDVNLKEIA (263 aa)). Asp-13, His-201, His-203, and Asn-237 together coordinate Mn(2+). Positions 390–486 (KVEIIHVTSG…LSTDIIEASA (97 aa)) are regulatory domain.

It belongs to the alpha-IPM synthase/homocitrate synthase family. LeuA type 1 subfamily. Mn(2+) is required as a cofactor.

The protein localises to the cytoplasm. It carries out the reaction 3-methyl-2-oxobutanoate + acetyl-CoA + H2O = (2S)-2-isopropylmalate + CoA + H(+). It functions in the pathway amino-acid biosynthesis; L-leucine biosynthesis; L-leucine from 3-methyl-2-oxobutanoate: step 1/4. Catalyzes the condensation of the acetyl group of acetyl-CoA with 3-methyl-2-oxobutanoate (2-ketoisovalerate) to form 3-carboxy-3-hydroxy-4-methylpentanoate (2-isopropylmalate). The sequence is that of 2-isopropylmalate synthase from Pyrococcus abyssi (strain GE5 / Orsay).